The chain runs to 332 residues: Probable endo-beta-1,4-glucanase B (332 aa).

The N-terminal stretch at 1–18 (MKFQSTLLLAAAAGSALA) is a signal peptide. 2 N-linked (GlcNAc...) asparagine glycosylation sites follow: N38 and N100. E160 acts as the Proton donor in catalysis. N212 carries an N-linked (GlcNAc...) asparagine glycan. E267 functions as the Nucleophile in the catalytic mechanism. N-linked (GlcNAc...) asparagine glycosylation occurs at N289.

The protein belongs to the glycosyl hydrolase 5 (cellulase A) family.

It is found in the secreted. It catalyses the reaction Endohydrolysis of (1-&gt;4)-beta-D-glucosidic linkages in cellulose, lichenin and cereal beta-D-glucans.. Its function is as follows. Has endoglucanase activity on substrates containing beta-1,4 glycosidic bonds, like in carboxymethylcellulose (CMC), hydroxyethylcellulose (HEC) and beta-glucan. Involved in the degradation of complex natural cellulosic substrates. The sequence is that of Probable endo-beta-1,4-glucanase B (eglB) from Aspergillus kawachii (strain NBRC 4308) (White koji mold).